The following is a 217-amino-acid chain: Somatotropin (217 aa).

Residues methionine 1–alanine 27 form the signal peptide. Residue histidine 46 coordinates Zn(2+). The cysteines at positions 79 and 190 are disulfide-linked. Serine 132 carries the phosphoserine modification. Glutamate 199 is a binding site for Zn(2+). Cysteines 207 and 215 form a disulfide.

This sequence belongs to the somatotropin/prolactin family.

The protein resides in the secreted. Functionally, plays an important role in growth control. Its major role in stimulating body growth is to stimulate the liver and other tissues to secrete IGF1. It stimulates both the differentiation and proliferation of myoblasts. It also stimulates amino acid uptake and protein synthesis in muscle and other tissues. The protein is Somatotropin (GH1) of Xanthonycticebus pygmaeus (Pygmy slow loris).